A 370-amino-acid polypeptide reads, in one-letter code: 3-dehydroquinate synthase (370 aa).

NAD(+) is bound by residues 107–111, 131–132, Lys-144, and Lys-153; these read GVIGD and TS. 3 residues coordinate Zn(2+): Glu-186, His-249, and His-267.

The protein belongs to the sugar phosphate cyclases superfamily. Dehydroquinate synthase family. Co(2+) serves as cofactor. Zn(2+) is required as a cofactor. Requires NAD(+) as cofactor.

It localises to the cytoplasm. The enzyme catalyses 7-phospho-2-dehydro-3-deoxy-D-arabino-heptonate = 3-dehydroquinate + phosphate. It participates in metabolic intermediate biosynthesis; chorismate biosynthesis; chorismate from D-erythrose 4-phosphate and phosphoenolpyruvate: step 2/7. In terms of biological role, catalyzes the conversion of 3-deoxy-D-arabino-heptulosonate 7-phosphate (DAHP) to dehydroquinate (DHQ). The polypeptide is 3-dehydroquinate synthase (Ruegeria pomeroyi (strain ATCC 700808 / DSM 15171 / DSS-3) (Silicibacter pomeroyi)).